A 534-amino-acid polypeptide reads, in one-letter code: Zinc finger protein 703-A (534 aa).

Disordered stretches follow at residues 1–35 (MNCS…THPV), 90–251 (SQIG…VAPV), and 300–320 (QLPG…LTGA). 3 stretches are compositionally biased toward low complexity: residues 15–34 (QSSS…PTHP), 115–124 (RSSSLKLGES), and 146–155 (GSSAGGSADK). Residues 173–182 (SPSSRVSSPG) show a composition bias toward polar residues. Positions 185-200 (CDSKNNESQEKKEPEA) are enriched in basic and acidic residues. Polar residues predominate over residues 204 to 217 (SLETSQANPTLTRA). Low complexity predominate over residues 218–229 (SISNSSAESSQS). The segment covering 230–239 (GDVTPSSKSD) has biased composition (polar residues). The segment at 406–434 (HICNWVSASGPCDKRFATSEELLAHLRTH) adopts a C2H2-type zinc-finger fold.

This sequence belongs to the Elbow/Noc family.

The protein resides in the nucleus. It localises to the cytoplasm. Transcriptional corepressor which does not bind directly to DNA and may regulate transcription through recruitment of histone deacetylases to gene promoters. Regulates cell adhesion, migration and proliferation. Involved in specification of the lateral neural plate border (NPB). May be required for segmental gene expression during hindbrain development. The polypeptide is Zinc finger protein 703-A (znf703-a) (Xenopus laevis (African clawed frog)).